Reading from the N-terminus, the 234-residue chain is uncharacterized protein (234 aa).

L-glutamine is bound at residue 68-70; the sequence is GES. Cys-101 functions as the Nucleophile in the catalytic mechanism. Residues Arg-131 and 167 to 168 each bind L-glutamine; that span reads IR. Catalysis depends on charge relay system residues His-208 and Glu-210.

It belongs to the glutaminase PdxT/SNO family.

Its subcellular location is the cytoplasm. It carries out the reaction L-glutamine + H2O = L-glutamate + NH4(+). This is an uncharacterized protein from Schizosaccharomyces pombe (strain 972 / ATCC 24843) (Fission yeast).